Consider the following 275-residue polypeptide: MVVKIGIIKSGNIGTSPVLDLLLDERADRPNIDVRVFGSGAKMNPEQVEDVVPKVDQFDPDFCIFISPNPGAPGPAKARELLSEKDIPAIIIGDAPGKGKKDEMDEQGLGYIIVMSDPMIGAKREWLDPTEMAIFNADILKVLAETGALRLVQNTIDGVIDGAAAGNIELPKLIITAEKAVEAAGFENPYAKAKAIAAYEMAGAVANLDMKGCFMTKGFENFIPLVAAAHEMAASAAALADEAREIEKGNDSVLRTPHMKEGNTGCKTDLISKPE.

It belongs to the MTD family.

It catalyses the reaction 5,10-methylenetetrahydromethanopterin + oxidized coenzyme F420-(gamma-L-Glu)(n) + 2 H(+) = 5,10-methenyl-5,6,7,8-tetrahydromethanopterin + reduced coenzyme F420-(gamma-L-Glu)(n). It participates in one-carbon metabolism; methanogenesis from CO(2); 5,10-methylene-5,6,7,8-tetrahydromethanopterin from 5,10-methenyl-5,6,7,8-tetrahydromethanopterin (coenzyme F420 route): step 1/1. Functionally, catalyzes the reversible reduction of methenyl-H(4)MPT(+) to methylene-H(4)MPT. This chain is F420-dependent methylenetetrahydromethanopterin dehydrogenase, found in Methanobrevibacter smithii (strain ATCC 35061 / DSM 861 / OCM 144 / PS).